Here is a 469-residue protein sequence, read N- to C-terminus: UDP-N-acetylmuramate--L-alanine ligase (469 aa).

113–119 (GTHGKTT) serves as a coordination point for ATP.

It belongs to the MurCDEF family.

It localises to the cytoplasm. It catalyses the reaction UDP-N-acetyl-alpha-D-muramate + L-alanine + ATP = UDP-N-acetyl-alpha-D-muramoyl-L-alanine + ADP + phosphate + H(+). The protein operates within cell wall biogenesis; peptidoglycan biosynthesis. Functionally, cell wall formation. This is UDP-N-acetylmuramate--L-alanine ligase from Neisseria meningitidis serogroup A / serotype 4A (strain DSM 15465 / Z2491).